The following is a 52-amino-acid chain: uncharacterized protein (52 aa).

Residues 21 to 40 (VAMNSYVELLFLSVPLIHIF) form a helical membrane-spanning segment.

Its subcellular location is the cell membrane. This is an uncharacterized protein from Bacillus subtilis (strain 168).